A 264-amino-acid chain; its full sequence is O-methyltransferase resE (264 aa).

S-adenosyl-L-methionine is bound by residues Gln97 and His142.

Belongs to the methyltransferase superfamily.

The enzyme catalyses desmethylrestrictinol + S-adenosyl-L-methionine = restrictinol + S-adenosyl-L-homocysteine + H(+). It participates in antifungal biosynthesis. In terms of biological role, O-methyltransferase; part of the gene cluster that mediates the biosynthesis of the tetrahydropyranyl antifungal agent restricticin that acts as an inhibitor of CYP51 and blocks the ergosterol biosynthesis. Within the pathway, resE uses S-adenosylmethionine to methylate position C4 of desmethylrestrictinol to produce restrictinol. The highly reducing polyketide synthase resH, the short chain dehydrogenase resG, the cyclase resF, the FAD-dependent monooxygenase resA and the enoylreductase resD are required to generate the first stable intermediate desmethylrestrictinol. ResH with resD biosynthesize the first polyketide chain intermediate that is reduced by resG, followed by epoxidation by resA before 6-endo cyclization via epoxide opening by resF leads to desmethylrestrictinol. The methyltransferase resE then catalyzes the C4 O-methylation of desmethylrestrictinol to produce restrictinol, and the nonribosomal peptide synthetase resC catalyzes the C3 esterification of restrictinol with glycine that leads to restricticin. This is O-methyltransferase resE from Aspergillus sclerotiorum.